We begin with the raw amino-acid sequence, 182 residues long: Ribosome maturation factor RimM (182 aa).

Residues 102-182 form the PRC barrel domain; the sequence is GEGDYYWKDL…TIEVDWDPGF (81 aa).

The protein belongs to the RimM family. In terms of assembly, binds ribosomal protein uS19.

The protein resides in the cytoplasm. In terms of biological role, an accessory protein needed during the final step in the assembly of 30S ribosomal subunit, possibly for assembly of the head region. Essential for efficient processing of 16S rRNA. May be needed both before and after RbfA during the maturation of 16S rRNA. It has affinity for free ribosomal 30S subunits but not for 70S ribosomes. This chain is Ribosome maturation factor RimM, found in Pectobacterium carotovorum subsp. carotovorum (strain PC1).